The following is a 360-amino-acid chain: GDSL esterase/lipase At2g31540 (360 aa).

A signal peptide spans 1-23 (MSTSKAITLTLFIATTLLAPCNA). The Nucleophile role is filled by Ser42. Residues Asn104 and Asn326 are each glycosylated (N-linked (GlcNAc...) asparagine). Catalysis depends on residues Asp334 and His337.

The protein belongs to the 'GDSL' lipolytic enzyme family.

It is found in the secreted. This Arabidopsis thaliana (Mouse-ear cress) protein is GDSL esterase/lipase At2g31540.